Consider the following 322-residue polypeptide: MRVAVLGAGAWGTALAVLLASKGVPTRLWARRKAQAEALKAMRENRDYLPGVALPAYLYPTHDPEEALEGAELAVLAVPSKALRETVAGLPPAPWYVSATKGLFYGEEGVRTPAEVVEALTQRPVVALSGPNHAEEVARFLPTASVAAGPEDLARRVQALFSGPTFRVYTSRDRRGVELGGAVKNVLALAAGMVDGLRLGDNAKAALLTRGLKEMVRFGTALGGEEATFYGLAGLGDLLATAYSLHSRNRMAGESLVRGVDREALEARGVVEGLYAVKAMVAWGKEQGVELPVAEAVHRVAHEGLDPLAALKALMAREPKEE.

NADPH contacts are provided by tryptophan 11, arginine 31, arginine 32, and lysine 101. Sn-glycerol 3-phosphate-binding residues include lysine 101 and glycine 130. Residue alanine 134 coordinates NADPH. Sn-glycerol 3-phosphate contacts are provided by lysine 184, aspartate 237, serine 247, arginine 248, and asparagine 249. The Proton acceptor role is filled by lysine 184. NADPH is bound at residue arginine 248. 2 residues coordinate NADPH: valine 270 and glutamate 272.

It belongs to the NAD-dependent glycerol-3-phosphate dehydrogenase family.

It is found in the cytoplasm. It carries out the reaction sn-glycerol 3-phosphate + NAD(+) = dihydroxyacetone phosphate + NADH + H(+). It catalyses the reaction sn-glycerol 3-phosphate + NADP(+) = dihydroxyacetone phosphate + NADPH + H(+). The protein operates within membrane lipid metabolism; glycerophospholipid metabolism. In terms of biological role, catalyzes the reduction of the glycolytic intermediate dihydroxyacetone phosphate (DHAP) to sn-glycerol 3-phosphate (G3P), the key precursor for phospholipid synthesis. The protein is Glycerol-3-phosphate dehydrogenase [NAD(P)+] of Thermus thermophilus (strain ATCC BAA-163 / DSM 7039 / HB27).